The primary structure comprises 420 residues: Nucleobindin-2 (420 aa).

The signal sequence occupies residues 1 to 24 (MRWRTILLQYCFLLITCLLTALEA). The DNA-binding element occupies 171 to 223 (KTRHEEFKKYEMMKEHERREYLKTLNEEKRKEEESKFEEMKKKHENHPKVNHP). Residues 195 to 212 (LNEEKRKEEESKFEEMKK) are compositionally biased toward basic and acidic residues. The segment at 195 to 225 (LNEEKRKEEESKFEEMKKKHENHPKVNHPGS) is disordered. Residues 213-420 (KHENHPKVNH…AGELKFEPHI (208 aa)) are binds to necdin. EF-hand domains are found at residues 241 to 276 (PNDFDPKTFFKLHDVNSDGFLDEQELEALFTKELEK) and 293 to 328 (ERLRMREHVMNEVDTNKDRLVTLEEFLKATEKKEFL). Positions 254 and 256 each coordinate Ca(2+). S257 carries the post-translational modification Phosphoserine. Ca(2+) is bound by residues D258, E265, D306, N308, D310, and E317. Positions 304 to 334 (EVDTNKDRLVTLEEFLKATEKKEFLEPDSWE) match the GBA motif. S332 carries the post-translational modification Phosphoserine. The interval 398 to 420 (QKKLQQGIPPSGPAGELKFEPHI) is disordered.

The protein belongs to the nucleobindin family. As to quaternary structure, interacts (via GBA motif) with guanine nucleotide-binding protein G(i) alpha subunit GNAI3. Preferentially interacts with inactive rather than active GNAI3. Interaction with GNAI3 is inhibited when NUCB2 binds calcium, probably due to a conformational change which renders the GBA motif inaccessible. Binds to the postmitotic growth suppressor NDN; coexpression abolishes NUCB2 secretion. Interacts with MC4R. As to expression, predominantly expressed in spleen, testis and normal stomach.

Its subcellular location is the golgi apparatus. The protein resides in the membrane. It is found in the cytoplasm. It localises to the secreted. The protein localises to the endoplasmic reticulum. Its subcellular location is the nucleus envelope. In terms of biological role, calcium-binding protein which may have a role in calcium homeostasis. Acts as a non-receptor guanine nucleotide exchange factor which binds to and activates guanine nucleotide-binding protein (G-protein) alpha subunit GNAI3. Functionally, anorexigenic peptide, seems to play an important role in hypothalamic pathways regulating food intake and energy homeostasis, acting in a leptin-independent manner. May also exert hypertensive roles and modulate blood pressure through directly acting on peripheral arterial resistance. In intestinal epithelial cells, plays a role in the inhibition of hepatic glucose production via MC4R receptor leading to increased cyclic adenosine monophosphate (cAMP) levels and glucagon-like peptide 1 (GLP-1) secretion. The chain is Nucleobindin-2 from Homo sapiens (Human).